A 406-amino-acid polypeptide reads, in one-letter code: Phosphopentomutase (406 aa).

6 residues coordinate Mn(2+): D10, D305, H310, D346, H347, and H358.

Belongs to the phosphopentomutase family. Requires Mn(2+) as cofactor.

Its subcellular location is the cytoplasm. The enzyme catalyses 2-deoxy-alpha-D-ribose 1-phosphate = 2-deoxy-D-ribose 5-phosphate. The catalysed reaction is alpha-D-ribose 1-phosphate = D-ribose 5-phosphate. It functions in the pathway carbohydrate degradation; 2-deoxy-D-ribose 1-phosphate degradation; D-glyceraldehyde 3-phosphate and acetaldehyde from 2-deoxy-alpha-D-ribose 1-phosphate: step 1/2. Functionally, isomerase that catalyzes the conversion of deoxy-ribose 1-phosphate (dRib-1-P) and ribose 1-phosphate (Rib-1-P) to deoxy-ribose 5-phosphate (dRib-5-P) and ribose 5-phosphate (Rib-5-P), respectively. The polypeptide is Phosphopentomutase (Photobacterium profundum (strain SS9)).